The sequence spans 453 residues: Cholesterol 7-desaturase nvd (453 aa).

A helical transmembrane segment spans residues 53–73 (IVEYILILTLMFAFSAILYVI). The Rieske domain occupies 126–229 (WFAVAETREL…VVETDGAIWI (104 aa)). 4 residues coordinate [2Fe-2S] cluster: Cys-167, His-169, Cys-187, and His-190.

This sequence belongs to the cholesterol 7-desaturase family. [2Fe-2S] cluster is required as a cofactor.

It localises to the membrane. It carries out the reaction cholesterol + NADPH + O2 + H(+) = 7-dehydrocholesterol + NADP(+) + 2 H2O. The enzyme catalyses cholesterol + NADH + O2 + H(+) = 7-dehydrocholesterol + NAD(+) + 2 H2O. The protein operates within steroid hormone biosynthesis; dafachronic acid biosynthesis. Functionally, catalyzes the production of 7-dehydrocholesterol (7-DHC or cholesta-5,7-dien-3beta-ol) by inserting a double bond (desaturating) at the C7-C8 single bond of cholesterol. Essential regulator of steroid biosynthesis as this reaction is the first step in the synthesis of the steroid hormone Delta(7)-dafachronic acid. This chain is Cholesterol 7-desaturase nvd, found in Bombyx mori (Silk moth).